The following is a 207-amino-acid chain: LexA repressor (207 aa).

The segment at residues 28 to 47 is a DNA-binding region (H-T-H motif); sequence VREIARRFRITPRGAQLHLV. Catalysis depends on for autocatalytic cleavage activity residues S119 and K156.

It belongs to the peptidase S24 family. In terms of assembly, homodimer.

It carries out the reaction Hydrolysis of Ala-|-Gly bond in repressor LexA.. In terms of biological role, represses a number of genes involved in the response to DNA damage (SOS response), including recA and lexA. In the presence of single-stranded DNA, RecA interacts with LexA causing an autocatalytic cleavage which disrupts the DNA-binding part of LexA, leading to derepression of the SOS regulon and eventually DNA repair. The chain is LexA repressor from Thermotoga neapolitana (strain ATCC 49049 / DSM 4359 / NBRC 107923 / NS-E).